Reading from the N-terminus, the 413-residue chain is N5-carboxyaminoimidazole ribonucleotide synthase (413 aa).

The segment at 1–21 is disordered; it reads MKRVSEQAGNPDGNPQAHVPG. Residues K122, K162, 199 to 202, E207, and 289 to 290 each bind ATP; these read EEKV and NE. The 194-residue stretch at 126-319 folds into the ATP-grasp domain; that stretch reads RERLAELGAP…QFEQHLRAVM (194 aa).

It belongs to the PurK/PurT family. In terms of assembly, homodimer.

It catalyses the reaction 5-amino-1-(5-phospho-beta-D-ribosyl)imidazole + hydrogencarbonate + ATP = 5-carboxyamino-1-(5-phospho-D-ribosyl)imidazole + ADP + phosphate + 2 H(+). It functions in the pathway purine metabolism; IMP biosynthesis via de novo pathway; 5-amino-1-(5-phospho-D-ribosyl)imidazole-4-carboxylate from 5-amino-1-(5-phospho-D-ribosyl)imidazole (N5-CAIR route): step 1/2. Catalyzes the ATP-dependent conversion of 5-aminoimidazole ribonucleotide (AIR) and HCO(3)(-) to N5-carboxyaminoimidazole ribonucleotide (N5-CAIR). This chain is N5-carboxyaminoimidazole ribonucleotide synthase, found in Corynebacterium ammoniagenes (Brevibacterium ammoniagenes).